A 428-amino-acid polypeptide reads, in one-letter code: Cyclic AMP-responsive element-binding protein 3-like protein 4 (428 aa).

Residues Met-1–Asn-68 form a required for transcriptional activation region. The Cytoplasmic segment spans residues Met-1 to Ser-294. The tract at residues Tyr-71 to Val-111 is disordered. The bZIP domain maps to Ile-216–Leu-279. The basic motif stretch occupies residues Lys-218–Arg-247. The interval Leu-258–Leu-279 is leucine-zipper. A helical; Signal-anchor for type II membrane protein membrane pass occupies residues Thr-295–Phe-315. The Lumenal portion of the chain corresponds to Arg-316 to Met-428. Residues Asn-339–Met-428 are disordered. Residues Thr-354–Arg-368 are compositionally biased toward basic and acidic residues. Asn-418 carries an N-linked (GlcNAc...) asparagine glycan.

It belongs to the bZIP family. ATF subfamily. Binds DNA as a dimer. In terms of processing, controlled by regulated intramembrane proteolysis (RIP). A fragment containing the cytoplasmic transcription factor domain is released by proteolysis. The cleavage seems to be performed sequentially by site-1 and site-2 proteases (PS1 and PS2).

It localises to the endoplasmic reticulum membrane. It is found in the nucleus. Functionally, transcriptional activator. This Xenopus tropicalis (Western clawed frog) protein is Cyclic AMP-responsive element-binding protein 3-like protein 4 (creb3l4).